The primary structure comprises 492 residues: MIITQTSHCYMTSLGILFLINILPGTTGQGESRRQEPGDFVKQDIGGLSPKHAPDIPDDSTDNITIFTRILDRLLDGYDNRLRPGLGDAVTEVKTDIYVTSFGPVSDTDMEYTIDVFFRQTWHDERLKFDGPMKILPLNNLLASKIWTPDTFFHNGKKSVAHNMTTPNKLLRLVDNGTLLYTMRLTIHAECPMHLEDFPMDVHACPLKFGSYAYTTAEVVYSWTLGKNKSVEVAQDGSRLNQYDLLGHVVGTEIIRSSTGEYVVMTTHFHLKRKIGYFVIQTYLPCIMTVILSQVSFWLNRESVPARTVFGVTTVLTMTTLSISARNSLPKVAYATAMDWFIAVCYAFVFSALIEFATVNYFTKRSWAWEGKKVPEALEMKKKTPAAPAKKTSTTFNIVGTTYPINLAKDTEFSTISKGAAPSASSTPTIIASPKATYVQDSPTETKTYNSVSKVDKISRIIFPVLFAIFNLVYWATYVNRESAIKGMIRKQ.

The N-terminal stretch at 1 to 28 (MIITQTSHCYMTSLGILFLINILPGTTG) is a signal peptide. A disordered region spans residues 28 to 54 (GQGESRRQEPGDFVKQDIGGLSPKHAP). At 29 to 274 (QGESRRQEPG…MTTHFHLKRK (246 aa)) the chain is on the extracellular side. Basic and acidic residues predominate over residues 31 to 42 (ESRRQEPGDFVK). Residue N63 is glycosylated (N-linked (GlcNAc...) asparagine). R119 contributes to the 4-aminobutanoate binding site. 2 N-linked (GlcNAc...) asparagine glycosylation sites follow: N163 and N176. T182 is a binding site for 4-aminobutanoate. The cysteines at positions 191 and 205 are disulfide-linked. Residue N228 is glycosylated (N-linked (GlcNAc...) asparagine). A helical membrane pass occupies residues 275-295 (IGYFVIQTYLPCIMTVILSQV). At 296–305 (SFWLNRESVP) the chain is on the cytoplasmic side. The chain crosses the membrane as a helical span at residues 306–325 (ARTVFGVTTVLTMTTLSISA). Over 326–336 (RNSLPKVAYAT) the chain is Extracellular. Residues 337–357 (AMDWFIAVCYAFVFSALIEFA) traverse the membrane as a helical segment. Residues 358–457 (TVNYFTKRSW…TYNSVSKVDK (100 aa)) are Cytoplasmic-facing. S426 bears the Phosphoserine mark. Phosphothreonine is present on T427. Residues S433 and S442 each carry the phosphoserine modification. The helical transmembrane segment at 458–478 (ISRIIFPVLFAIFNLVYWATY) threads the bilayer. The Extracellular portion of the chain corresponds to 479-492 (VNRESAIKGMIRKQ).

The protein belongs to the ligand-gated ion channel (TC 1.A.9) family. Gamma-aminobutyric acid receptor (TC 1.A.9.5) subfamily. GABRA3 sub-subfamily. In terms of assembly, heteropentamer, formed by a combination of alpha (GABRA1-6), beta (GABRB1-3), gamma (GABRG1-3), delta (GABRD), epsilon (GABRE), rho (GABRR1-3), pi (GABRP) and theta (GABRQ) chains, each subunit exhibiting distinct physiological and pharmacological properties. Binds UBQLN1. Interacts with GPHN.

It is found in the postsynaptic cell membrane. The protein localises to the cell membrane. It carries out the reaction chloride(in) = chloride(out). With respect to regulation, potentiated by etomidate, propofol, pregnanolone and flurazepam. Alpha subunit of the heteropentameric ligand-gated chloride channel gated by gamma-aminobutyric acid (GABA), a major inhibitory neurotransmitter in the brain. GABA-gated chloride channels, also named GABA(A) receptors (GABAAR), consist of five subunits arranged around a central pore and contain GABA active binding site(s) located at the alpha and beta subunit interface(s). When activated by GABA, GABAARs selectively allow the flow of chloride anions across the cell membrane down their electrochemical gradient. Chloride influx into the postsynaptic neuron following GABAAR opening decreases the neuron ability to generate a new action potential, thereby reducing nerve transmission. The chain is Gamma-aminobutyric acid receptor subunit alpha-3 from Homo sapiens (Human).